A 911-amino-acid polypeptide reads, in one-letter code: Protein translocase subunit SecA (911 aa).

ATP-binding positions include glutamine 86, 104 to 108 (GEGKT), and aspartate 494. Positions 856 to 911 (VEGIDAPQRPAQLRFTGPSEDGQSAVTRSGTDSGATVAAGTNRRSRRQAERRGRRG) are disordered. Residues 876–889 (DGQSAVTRSGTDSG) are compositionally biased toward polar residues. The segment covering 902 to 911 (RQAERRGRRG) has biased composition (basic and acidic residues).

The protein belongs to the SecA family. In terms of assembly, monomer and homodimer. Part of the essential Sec protein translocation apparatus which comprises SecA, SecYEG and auxiliary proteins SecDF. Other proteins may also be involved.

It localises to the cell membrane. The protein localises to the cytoplasm. The enzyme catalyses ATP + H2O + cellular proteinSide 1 = ADP + phosphate + cellular proteinSide 2.. Its function is as follows. Part of the Sec protein translocase complex. Interacts with the SecYEG preprotein conducting channel. Has a central role in coupling the hydrolysis of ATP to the transfer of proteins into and across the cell membrane, serving as an ATP-driven molecular motor driving the stepwise translocation of polypeptide chains across the membrane. The chain is Protein translocase subunit SecA from Micrococcus luteus (strain ATCC 4698 / DSM 20030 / JCM 1464 / CCM 169 / CCUG 5858 / IAM 1056 / NBRC 3333 / NCIMB 9278 / NCTC 2665 / VKM Ac-2230) (Micrococcus lysodeikticus).